Reading from the N-terminus, the 498-residue chain is Guanosine-5'-triphosphate,3'-diphosphate pyrophosphatase (498 aa).

The protein belongs to the GppA/Ppx family. GppA subfamily.

It carries out the reaction guanosine 3'-diphosphate 5'-triphosphate + H2O = guanosine 3',5'-bis(diphosphate) + phosphate + H(+). The protein operates within purine metabolism; ppGpp biosynthesis; ppGpp from GTP: step 2/2. Functionally, catalyzes the conversion of pppGpp to ppGpp. Guanosine pentaphosphate (pppGpp) is a cytoplasmic signaling molecule which together with ppGpp controls the 'stringent response', an adaptive process that allows bacteria to respond to amino acid starvation, resulting in the coordinated regulation of numerous cellular activities. This Yersinia enterocolitica serotype O:8 / biotype 1B (strain NCTC 13174 / 8081) protein is Guanosine-5'-triphosphate,3'-diphosphate pyrophosphatase.